A 245-amino-acid polypeptide reads, in one-letter code: Eukaryotic translation initiation factor 4E type 2 (245 aa).

Over residues 1–38 the composition is skewed to basic and acidic residues; that stretch reads MNNKFDALKDDDSGDHDQNEENSTQKDGEKEKTDRDKS. Residues 1-52 are disordered; that stretch reads MNNKFDALKDDDSGDHDQNEENSTQKDGEKEKTDRDKSQSSGKRKAVVPGPA. Serine 13 bears the Phosphoserine mark. The tract at residues 54–57 is EIF4EBP1/2/3 binding; that stretch reads HPLQ. 78–79 is an mRNA binding site; the sequence is YE. Residues 95-99 are EIF4EBP1/2/3 binding; that stretch reads WKFYS. MRNA contacts are provided by residues histidine 110 and 124–125; that span reads WE. Lysine 134 carries the N6-acetyllysine; alternate modification. Lysine 134 is covalently cross-linked (Glycyl lysine isopeptide (Lys-Gly) (interchain with G-Cter in ISG15); alternate). The interval 150–157 is EIF4EBP1/2/3 binding; sequence NLILAMLG. MRNA-binding positions include 174–179 and 222–224; these read RFQEDI and KMP. A Glycyl lysine isopeptide (Lys-Gly) (interchain with G-Cter in ISG15) cross-link involves residue lysine 222.

The protein belongs to the eukaryotic initiation factor 4E family. Interacts with EIF4EBP1, EIF4EBP2 and EIF4EBP3. Does not interact with eIF4G (EIF4G1, EIF4G2 or EIF4G3). Component of the 4EHP-GYF2 complex, at least composed of EIF4E2, GIGYF2 and ZNF598. Interacts with GIGYF2 (via the 4EHP-binding motif); the interaction is direct. Interacts with EIF4ENIF1/4E-T (via YXXXXLphi motif); increasing affinity for the 7-methylguanosine-containing mRNA cap. In terms of processing, ubiquitinated by ARIH1. The consequences of ubiquitination are however unclear: according to a report, EIF4E2 ubiquitination leads to promote EIF4E2 cap-binding and protein translation arrest. According to another report ubiquitination leads to its subsequent degradation. ISGylation enhances its cap structure-binding activity and translation-inhibition activity. Widely expressed with highest levels in testis, kidney and liver.

Its subcellular location is the cytoplasm. The protein localises to the P-body. In terms of biological role, recognizes and binds the 7-methylguanosine-containing mRNA cap during an early step in the initiation. Acts as a repressor of translation initiation. In contrast to EIF4E, it is unable to bind eIF4G (EIF4G1, EIF4G2 or EIF4G3), suggesting that it acts by competing with EIF4E and block assembly of eIF4F at the cap. In P-bodies, component of a complex that promotes miRNA-mediated translational repression. Involved in virus-induced host response by mediating miRNA MIR34A-induced translational silencing which controls IFNB1 production by a negative feedback mechanism. Component of the 4EHP-GYF2 complex, a multiprotein complex that acts as a repressor of translation initiation. In association with GIGYF2, assists ribosome-associated quality control (RQC) by sequestering the mRNA cap, blocking ribosome initiation and decreasing the translational load on problematic messages. Part of a pathway that works in parallel to RQC-mediated degradation of the stalled nascent polypeptide. GIGYF2 and EIF4E2 work downstream and independently of ZNF598, which seems to work as a scaffold that can recruit them to faulty mRNA even if alternative recruitment mechanisms may exist. This Mus musculus (Mouse) protein is Eukaryotic translation initiation factor 4E type 2.